The following is a 60-amino-acid chain: Temporin-CG1 (60 aa).

The signal sequence occupies residues Met-1–Cys-22. A propeptide spans Glu-23–Glu-43 (removed in mature form).

As to expression, expressed by the skin glands.

Its subcellular location is the secreted. Functionally, antimicrobial peptide active against a variety of Gram-positive and some Gram-negative bacterial strains. Has antifungal activity against a slime mold isolate. Has weak hemolytic activity against human erythrocytes. This Amolops chunganensis (Chungan torrent frog) protein is Temporin-CG1.